The sequence spans 414 residues: NADH-ubiquinone oxidoreductase chain 4 (414 aa).

The next 10 membrane-spanning stretches (helical) occupy residues 18-38 (LVQL…MIGV), 47-67 (IAAF…LMSI), 96-116 (IIFI…PLHL), 126-146 (PTAG…YGYI), 160-180 (YFPI…IATL), 188-208 (IVAY…FSGV), 216-236 (IILM…IGVI), 254-274 (MMPI…AFPI), 293-313 (IIIA…SFWL), and 375-395 (VNIF…IVGM).

Belongs to the complex I subunit 4 family.

It localises to the mitochondrion membrane. It carries out the reaction a ubiquinone + NADH + 5 H(+)(in) = a ubiquinol + NAD(+) + 4 H(+)(out). Functionally, core subunit of the mitochondrial membrane respiratory chain NADH dehydrogenase (Complex I) that is believed to belong to the minimal assembly required for catalysis. Complex I functions in the transfer of electrons from NADH to the respiratory chain. The immediate electron acceptor for the enzyme is believed to be ubiquinone. The sequence is that of NADH-ubiquinone oxidoreductase chain 4 (nad4) from Dictyostelium citrinum (Slime mold).